The primary structure comprises 342 residues: Aspartate carbamoyltransferase catalytic subunit (342 aa).

Positions 59 and 60 each coordinate carbamoyl phosphate. Position 87 (K87) interacts with L-aspartate. Residues R109, H142, and Q145 each contribute to the carbamoyl phosphate site. R182 and R253 together coordinate L-aspartate. Residues G294 and P295 each contribute to the carbamoyl phosphate site.

The protein belongs to the aspartate/ornithine carbamoyltransferase superfamily. ATCase family. In terms of assembly, heterododecamer (2C3:3R2) of six catalytic PyrB chains organized as two trimers (C3), and six regulatory PyrI chains organized as three dimers (R2).

It carries out the reaction carbamoyl phosphate + L-aspartate = N-carbamoyl-L-aspartate + phosphate + H(+). It participates in pyrimidine metabolism; UMP biosynthesis via de novo pathway; (S)-dihydroorotate from bicarbonate: step 2/3. Catalyzes the condensation of carbamoyl phosphate and aspartate to form carbamoyl aspartate and inorganic phosphate, the committed step in the de novo pyrimidine nucleotide biosynthesis pathway. This Synechococcus sp. (strain WH7803) protein is Aspartate carbamoyltransferase catalytic subunit.